Here is a 402-residue protein sequence, read N- to C-terminus: Cytochrome b561 and DOMON domain-containing protein At4g17280 (402 aa).

The signal sequence occupies residues 1–31; it reads MSNHMSIMKFLNQILCLSLILSISMTTLSFA. The DOMON domain occupies 54 to 171; it reads LDSFLHYTYE…GTINTVWQDG (118 aa). One can recognise a Cytochrome b561 domain in the interval 183–379; it reads TSGNNVRSVS…LEAFTWYVVI (197 aa). 2 helical membrane passes run 218–238 and 250–270; these read IHGI…AIIA and AWFY…VAGW. Residues H219, H255, and H288 each contribute to the heme b site. Residues 290–310 traverse the membrane as a helical segment; the sequence is AIGIALFSLATVQVFAMFLRP. H324 is a binding site for heme b. The next 2 helical transmembrane spans lie at 326–346 and 359–379; these read TIGY…LGIL and IIVV…YVVI.

Heme b serves as cofactor.

It localises to the membrane. May act as a catecholamine-responsive trans-membrane electron transporter. This is Cytochrome b561 and DOMON domain-containing protein At4g17280 from Arabidopsis thaliana (Mouse-ear cress).